The chain runs to 409 residues: Arginine deiminase (409 aa).

Cys399 (amidino-cysteine intermediate) is an active-site residue.

Belongs to the arginine deiminase family.

The protein localises to the cytoplasm. The enzyme catalyses L-arginine + H2O = L-citrulline + NH4(+). It functions in the pathway amino-acid degradation; L-arginine degradation via ADI pathway; carbamoyl phosphate from L-arginine: step 1/2. This is Arginine deiminase from Streptococcus sanguinis (strain SK36).